The sequence spans 183 residues: Efficient mitochondria targeting-associated protein 19 (183 aa).

The Cytoplasmic portion of the chain corresponds to 1–25 (MKVVSLRRIYSSEIYKLPTTRLHMD). The EXPERA domain occupies 24 to 156 (MDTLYYYYFV…PYLAIPLWMA (133 aa)). A helical transmembrane segment spans residues 26–46 (TLYYYYFVSHLAAALFVDLPI). The Lumenal segment spans residues 47 to 81 (TEWLGGSLSCLSGLRRFYLSTYEDPILLIPAPWKT). A helical membrane pass occupies residues 82 to 102 (ALFSSELFFQVPFFIWVSLRL). At 103 to 110 (RKKARDPV) the chain is on the cytoplasmic side. Residues 111 to 131 (LWVAILIYGVHAFTTTWCCMF) traverse the membrane as a helical segment. Residues 132-138 (ELFAEKK) are Lumenal-facing. Residues 139 to 159 (WMIMSFYFPYLAIPLWMAIDM) form a helical membrane-spanning segment. Residues 160 to 183 (GGRLVKSCHAAKSGPSSTITSKSD) lie on the Cytoplasmic side of the membrane.

Belongs to the TMEM97/sigma-2 receptor family.

The protein resides in the endoplasmic reticulum membrane. Functionally, part of an import route for newly synthesized mitochondrial proteins termed the ER-SURF pathway (ER surface-mediated protein targeting), which retrieves mitochondrial precursor proteins from the ER surface and reroutes them to mitochondria for efficient mitochondrial import. Acts as a quality control factor in the ER, promoting the proteolytic degradation of nonproductive and extramitochondrial precursor proteins in the ER membrane thus removing them from the ER surface. This Schizosaccharomyces pombe (strain 972 / ATCC 24843) (Fission yeast) protein is Efficient mitochondria targeting-associated protein 19 (ema19).